Reading from the N-terminus, the 184-residue chain is Inner membrane-spanning protein YciB (184 aa).

A run of 5 helical transmembrane segments spans residues 19–39, 52–72, 76–96, 123–143, and 151–171; these read LVGI…QLLI, LFMG…NQLE, WKVT…QYGF, LGWA…SQYL, and FKTF…GIYI.

This sequence belongs to the YciB family.

Its subcellular location is the cell inner membrane. Plays a role in cell envelope biogenesis, maintenance of cell envelope integrity and membrane homeostasis. In Pasteurella multocida (strain Pm70), this protein is Inner membrane-spanning protein YciB.